The following is a 426-amino-acid chain: Gamma-glutamyl phosphate reductase (426 aa).

It belongs to the gamma-glutamyl phosphate reductase family.

The protein resides in the cytoplasm. The enzyme catalyses L-glutamate 5-semialdehyde + phosphate + NADP(+) = L-glutamyl 5-phosphate + NADPH + H(+). It participates in amino-acid biosynthesis; L-proline biosynthesis; L-glutamate 5-semialdehyde from L-glutamate: step 2/2. Functionally, catalyzes the NADPH-dependent reduction of L-glutamate 5-phosphate into L-glutamate 5-semialdehyde and phosphate. The product spontaneously undergoes cyclization to form 1-pyrroline-5-carboxylate. In Acidovorax ebreus (strain TPSY) (Diaphorobacter sp. (strain TPSY)), this protein is Gamma-glutamyl phosphate reductase.